The chain runs to 180 residues: Large ribosomal subunit protein uL5 (180 aa).

This sequence belongs to the universal ribosomal protein uL5 family. Part of the 50S ribosomal subunit; part of the 5S rRNA/L5/L18/L25 subcomplex. Contacts the 5S rRNA and the P site tRNA. Forms a bridge to the 30S subunit in the 70S ribosome.

Functionally, this is one of the proteins that bind and probably mediate the attachment of the 5S RNA into the large ribosomal subunit, where it forms part of the central protuberance. In the 70S ribosome it contacts protein S13 of the 30S subunit (bridge B1b), connecting the 2 subunits; this bridge is implicated in subunit movement. Contacts the P site tRNA; the 5S rRNA and some of its associated proteins might help stabilize positioning of ribosome-bound tRNAs. This chain is Large ribosomal subunit protein uL5, found in Chlamydia abortus (strain DSM 27085 / S26/3) (Chlamydophila abortus).